Consider the following 20-residue polypeptide: Cytosol aminopeptidase (20 aa).

Ser-6 is subject to Phosphoserine.

It belongs to the peptidase M17 family. Homohexamer. Zn(2+) is required as a cofactor. It depends on Mn(2+) as a cofactor.

It localises to the cytoplasm. It carries out the reaction Release of an N-terminal amino acid, Xaa-|-Yaa-, in which Xaa is preferably Leu, but may be other amino acids including Pro although not Arg or Lys, and Yaa may be Pro. Amino acid amides and methyl esters are also readily hydrolyzed, but rates on arylamides are exceedingly low.. The catalysed reaction is an S-substituted L-cysteinylglycine + H2O = an S-substituted L-cysteine + glycine. It catalyses the reaction L-cysteinylglycine + H2O = L-cysteine + glycine. The enzyme catalyses S-benzyl-L-cysteinylglycine + H2O = S-benzyl-L-cysteine + glycine. It carries out the reaction Release of N-terminal proline from a peptide.. Its function is as follows. Cytosolic metallopeptidase that catalyzes the removal of unsubstituted N-terminal hydrophobic amino acids from various peptides. The presence of Zn(2+) ions is essential for the peptidase activity, and the association with other cofactors can modulate the substrate spectificity of the enzyme. For instance, in the presence of Mn(2+), it displays a specific Cys-Gly hydrolyzing activity of Cys-Gly-S-conjugates. Involved in the metabolism of glutathione and in the degradation of glutathione S-conjugates, which may play a role in the control of the cell redox status. In Mesocricetus auratus (Golden hamster), this protein is Cytosol aminopeptidase.